The primary structure comprises 759 residues: MMAALYPSTDLSGASSSSLPSSPSSSSPNEVMALKDVREVKEENTLNEKLFLLACDKGDYYMVKKILEENSSGDLNINCVDVLGRNAVTITIENENLDILQLLLDYGCQKLMERIQNPEYSTTMDVAPVILAAHRNNYEILTMLLKQDVSLPKPHAVGCECTLCSAKNKKDSLRHSRFRLDIYRCLASPALIMLTEEDPILRAFELSADLKELSLVEVEFRNDYEELARQCKMFAKDLLAQARNSRELEVILNHTSSDEPLDKRGLLEERMNLSRLKLAIKYNQKEFVSQSNCQQFLNTVWFGQMSGYRRKPTCKKIMTVLTVGIFWPVLSLCYLIAPKSQFGRIIHTPFMKFIIHGASYFTFLLLLNLYSLVYNEDKKNTMGPALERIDYLLILWIIGMIWSDIKRLWYEGLEDFLEESRNQLSFVMNSLYLATFALKVVAHNKFHDFADRKDWDAFHPTLVAEGLFAFANVLSYLRLFFMYTTSSILGPLQISMGQMLQDFGKFLGMFLLVLFSFTIGLTQLYDKGYTPKEQKDCVGIFCEQQSNDTFHSFIGTCFALFWYIFSLAHVAIFVTRFSYGEELQSFVGAVIVGTYNVVVVIVLTKLLVAMLHKSFQLIANHEDKEWKFARAKLWLSYFDDKCTLPPPFNIIPSPKTICYMISSLSKWICSHTSKGKVKRQNSLKEWRNLKQKRDENYQKVMCCLVHRYLTSMRQKMQSTDQATVENLNELRQDLSKFRNEIRDLLGFRTSKYAMFYPRN.

The tract at residues 1–30 (MMAALYPSTDLSGASSSSLPSSPSSSSPNE) is disordered. Over 1 to 352 (MMAALYPSTD…GRIIHTPFMK (352 aa)) the chain is Cytoplasmic. Residues 15–28 (SSSSLPSSPSSSSP) show a composition bias toward low complexity. ANK repeat units follow at residues 46 to 75 (LNEK…SGDL), 83 to 112 (LGRN…QKLM), and 124 to 153 (MDVA…SLPK). Residues 353-373 (FIIHGASYFTFLLLLNLYSLV) traverse the membrane as a helical segment. The Extracellular segment spans residues 374 to 381 (YNEDKKNT). The helical transmembrane segment at 382-402 (MGPALERIDYLLILWIIGMIW) threads the bilayer. The Cytoplasmic segment spans residues 403–461 (SDIKRLWYEGLEDFLEESRNQLSFVMNSLYLATFALKVVAHNKFHDFADRKDWDAFHPT). A helical transmembrane segment spans residues 462–482 (LVAEGLFAFANVLSYLRLFFM). The Extracellular segment spans residues 483–505 (YTTSSILGPLQISMGQMLQDFGK). A helical transmembrane segment spans residues 506 to 526 (FLGMFLLVLFSFTIGLTQLYD). Residues 527–552 (KGYTPKEQKDCVGIFCEQQSNDTFHS) are Cytoplasmic-facing. Residues 553–573 (FIGTCFALFWYIFSLAHVAIF) form a helical membrane-spanning segment. Residues 574-582 (VTRFSYGEE) are Extracellular-facing. The chain crosses the membrane as a helical span at residues 583 to 603 (LQSFVGAVIVGTYNVVVVIVL). The Cytoplasmic segment spans residues 604–759 (TKLLVAMLHK…SKYAMFYPRN (156 aa)).

Belongs to the transient receptor (TC 1.A.4) family. STrpC subfamily. TRPC1 sub-subfamily. In terms of assembly, homotetramer and heterotetramer with TRPC4 and/or TRPC5. Interacts with TRPC4 and TRPC5. Interacts with ITPR3. Interacts with MX1 and RNF24. Interacts with FKBP4. Interacts with TRPC4AP. Interacts with PLSCR1. Interacts with PKD2L2. Forms a heterotetramer with PKD2 with a 2:2 stoichiometry; has distinct channel properties separate from PKD2 or TRPC1 homomers alone. Activation of PRKCA induces phosphorylation of TRPC1 and subsequent Ca2+ entry into cells.

Its subcellular location is the cell membrane. The enzyme catalyses Ca(2+)(in) = Ca(2+)(out). Functionally, forms a receptor-activated non-selective calcium permeant cation channel. Probably is operated by a phosphatidylinositol second messenger system activated by receptor tyrosine kinases or G-protein coupled receptors. Also activated by intracellular calcium store depletion. This is Short transient receptor potential channel 1 (TRPC1) from Oryctolagus cuniculus (Rabbit).